The sequence spans 256 residues: Distal membrane-arm assembly complex protein 2 (256 aa).

Ser252 carries the phosphoserine modification.

The protein belongs to the ATP synthase subunit s family. Interacts with incompletely assembled mitochondrial NADH:ubiquinone oxidoreductase complex (complex I).

The protein resides in the mitochondrion. Functionally, required for the assembly of the mitochondrial NADH:ubiquinone oxidoreductase complex (complex I). Involved in the assembly of the distal region of complex I. This chain is Distal membrane-arm assembly complex protein 2, found in Macaca fascicularis (Crab-eating macaque).